A 167-amino-acid chain; its full sequence is MTRKQRRLLMIGGAGVVLIVAVGLVLNALRDSIVFFSTPKMVAEQHIEAGKRFRLGGVVEPGSLQRGEQLRVSFKVTDGAASLPVAYKGILPDLFREGQGVIAEGSLDKAGVFEADTVLAKHDEKYMPKEVADALKKDGHWKDDYGKKSPGETTAGQTSANAAEGGK.

Residues Met1–Arg7 lie on the Cytoplasmic side of the membrane. Residues Leu8–Ala28 traverse the membrane as a helical; Signal-anchor for type II membrane protein segment. Topologically, residues Leu29–Lys167 are periplasmic. Heme contacts are provided by His122 and Tyr126. A compositionally biased stretch (basic and acidic residues) spans Lys137–Pro150. Positions Lys137–Lys167 are disordered. Residues Gly151–Asn161 are compositionally biased toward polar residues.

This sequence belongs to the CcmE/CycJ family.

Its subcellular location is the cell inner membrane. Heme chaperone required for the biogenesis of c-type cytochromes. Transiently binds heme delivered by CcmC and transfers the heme to apo-cytochromes in a process facilitated by CcmF and CcmH. The chain is Cytochrome c-type biogenesis protein CcmE from Rhodopseudomonas palustris (strain ATCC BAA-98 / CGA009).